Reading from the N-terminus, the 221-residue chain is Ependymin-2 (221 aa).

A signal peptide spans Met1–Ala21. N-linked (GlcNAc...) asparagine glycosylation is found at Asn33, Asn73, and Asn97.

The protein belongs to the ependymin family. Binds calcium through the terminal sialic acids. In terms of tissue distribution, EPDs are synthesized in the meninx and secreted in the cerebrospinal fluid.

Its subcellular location is the secreted. Its function is as follows. May play a role in neural plasticity. May be involved during axon regeneration. In Salmo salar (Atlantic salmon), this protein is Ependymin-2 (epd2).